The primary structure comprises 682 residues: Tetratricopeptide repeat protein 39B (682 aa).

TPR repeat units lie at residues 393 to 426 and 626 to 659; these read SLVLFYHARIELLKGNLEEAQEVFQKCISVQEEW and PFTLFELASLYKSQGEIDKAIKFLETARNNYKDY.

The protein belongs to the TTC39 family.

Its function is as follows. Regulates high density lipoprotein (HDL) cholesterol metabolism by promoting the ubiquitination and degradation of the oxysterols receptors LXR (NR1H2 and NR1H3). The sequence is that of Tetratricopeptide repeat protein 39B from Homo sapiens (Human).